The following is a 408-amino-acid chain: NADH-quinone oxidoreductase subunit D (408 aa).

Belongs to the complex I 49 kDa subunit family. NDH-1 is composed of 14 different subunits. Subunits NuoB, C, D, E, F, and G constitute the peripheral sector of the complex.

The protein resides in the cell inner membrane. It carries out the reaction a quinone + NADH + 5 H(+)(in) = a quinol + NAD(+) + 4 H(+)(out). NDH-1 shuttles electrons from NADH, via FMN and iron-sulfur (Fe-S) centers, to quinones in the respiratory chain. The immediate electron acceptor for the enzyme in this species is believed to be ubiquinone. Couples the redox reaction to proton translocation (for every two electrons transferred, four hydrogen ions are translocated across the cytoplasmic membrane), and thus conserves the redox energy in a proton gradient. In Campylobacter jejuni subsp. jejuni serotype O:6 (strain 81116 / NCTC 11828), this protein is NADH-quinone oxidoreductase subunit D.